A 1533-amino-acid polypeptide reads, in one-letter code: DNA topoisomerase 2-alpha (1533 aa).

At Met1 the chain carries N-acetylmethionine. Residues 1-22 are disordered; the sequence is MEVSPLQPVNENMQVNKTKKNE. At Ser4 the chain carries Phosphoserine. Residues 7–16 are compositionally biased toward polar residues; that stretch reads QPVNENMQVN. Lys17 participates in a covalent cross-link: Glycyl lysine isopeptide (Lys-Gly) (interchain with G-Cter in SUMO2). Residues Asn91, Asn120, and 148–150 contribute to the ATP site; that span reads SSN. Residues Lys156 and Lys157 each participate in a glycyl lysine isopeptide (Lys-Gly) (interchain with G-Cter in SUMO2) cross-link. ATP is bound at residue 161–168; the sequence is GRNGYGAK. Lys261 is covalently cross-linked (Glycyl lysine isopeptide (Lys-Gly) (interchain with G-Cter in SUMO2)). Residue Thr282 is modified to Phosphothreonine. Residues 342–344 are interaction with DNA; sequence KKK. Lys352 participates in a covalent cross-link: Glycyl lysine isopeptide (Lys-Gly) (interchain with G-Cter in SUMO2). ATP is bound at residue 376–378; it reads QTK. Residues Lys386, Lys397, Lys416, Lys418, Lys425, and Lys440 each participate in a glycyl lysine isopeptide (Lys-Gly) (interchain with G-Cter in SUMO2) cross-link. Residues 455-572 form the Toprim domain; the sequence is CTLILTEGDS…SLLRHRFLEE (118 aa). Position 461 (Glu461) interacts with Mg(2+). Residues Lys466, Lys480, and Lys529 each participate in a glycyl lysine isopeptide (Lys-Gly) (interchain with G-Cter in SUMO2) cross-link. Positions 541 and 543 each coordinate Mg(2+). Residues Lys584, Lys599, Lys614, Lys622, Lys625, Lys632, Lys639, Lys655, Lys662, and Lys676 each participate in a glycyl lysine isopeptide (Lys-Gly) (interchain with G-Cter in SUMO2) cross-link. The 457-residue stretch at 715–1171 folds into the Topo IIA-type catalytic domain; the sequence is IPSMVDGLKP…SPSDLWKEDL (457 aa). Residue Tyr805 is the O-(5'-phospho-DNA)-tyrosine intermediate of the active site. An interaction with DNA region spans residues 990 to 999; it reads KLQTSLTCNS. A Glycyl lysine isopeptide (Lys-Gly) (interchain with G-Cter in SUMO2) cross-link involves residue Lys1075. Disordered stretches follow at residues 1090-1121 and 1183-1215; these read WKEAQQKVPDEEENEESDNEKEADKSDSVADS and AKEKQDEQIGLPGKGGKAKGKKTQMAEVLPSPC. A compositionally biased stretch (acidic residues) spans 1099–1108; it reads DEEENEESDN. Ser1106 is modified (phosphoserine; by CK1). Residues Lys1114, Lys1196, and Lys1204 each participate in a glycyl lysine isopeptide (Lys-Gly) (interchain with G-Cter in SUMO2) cross-link. Thr1205 bears the Phosphothreonine mark. Position 1213 is a phosphoserine (Ser1213). Lys1228 participates in a covalent cross-link: Glycyl lysine isopeptide (Lys-Gly) (interchain with G-Cter in SUMO2). The disordered stretch occupies residues 1231–1533; it reads AEKKIKKKIK…LEESDEDDLF (303 aa). Lys1240 participates in a covalent cross-link: Glycyl lysine isopeptide (Lys-Gly) (interchain with G-Cter in SUMO1); alternate. Lys1240 is covalently cross-linked (Glycyl lysine isopeptide (Lys-Gly) (interchain with G-Cter in SUMO2); alternate). Thr1244 carries the post-translational modification Phosphothreonine. A Phosphoserine modification is found at Ser1247. A compositionally biased stretch (basic and acidic residues) spans 1256-1272; the sequence is EGLKQRLEKKQKREPGT. Residues Lys1259, Lys1276, Lys1283, and Lys1286 each participate in a glycyl lysine isopeptide (Lys-Gly) (interchain with G-Cter in SUMO2) cross-link. 4 positions are modified to phosphoserine: Ser1295, Ser1297, Ser1299, and Ser1302. Thr1327 carries the post-translational modification Phosphothreonine. Residues Ser1332 and Ser1337 each carry the phosphoserine modification. At Thr1343 the chain carries Phosphothreonine. Ser1351 and Ser1354 each carry phosphoserine. Residues 1360–1371 show a composition bias toward basic and acidic residues; the sequence is TSPKHTNKEPKP. Residues Lys1363, Lys1367, and Lys1373 each participate in a glycyl lysine isopeptide (Lys-Gly) (interchain with G-Cter in SUMO2) cross-link. Phosphoserine occurs at positions 1374 and 1377. A Glycyl lysine isopeptide (Lys-Gly) (interchain with G-Cter in SUMO2) cross-link involves residue Lys1387. Residues Ser1393 and Ser1395 each carry the phosphoserine modification. Residues 1409–1433 show a composition bias toward low complexity; it reads KPVSKKNVTVKKTAAKSQSSTSTTG. Lys1424 is covalently cross-linked (Glycyl lysine isopeptide (Lys-Gly) (interchain with G-Cter in SUMO2); alternate). Lys1424 is modified (N6-acetyllysine; alternate). The tract at residues 1435–1441 is interaction with PLSCR1; the sequence is KKRAAPK. Basic and acidic residues predominate over residues 1443–1455; the sequence is AKKDPDLDSDVSK. A Glycyl lysine isopeptide (Lys-Gly) (interchain with G-Cter in SUMO2); alternate cross-link involves residue Lys1444. The residue at position 1444 (Lys1444) is an N6-acetyllysine; alternate. Phosphoserine is present on Ser1451. Glycyl lysine isopeptide (Lys-Gly) (interchain with G-Cter in SUMO2) cross-links involve residues Lys1456 and Lys1461. Ser1471 is modified (phosphoserine). The residue at position 1472 (Thr1472) is a Phosphothreonine. A phosphoserine mark is found at Ser1473, Ser1476, and Ser1478. Residues Lys1486 and Lys1494 each participate in a glycyl lysine isopeptide (Lys-Gly) (interchain with G-Cter in SUMO2) cross-link. Basic and acidic residues predominate over residues 1493 to 1504; sequence PKGESDDFHLDL. A phosphoserine mark is found at Ser1497 and Ser1527.

The protein belongs to the type II topoisomerase family. In terms of assembly, homodimer. Interacts with COPS5. Interacts with RECQL5; this stimulates DNA decatenation. Interacts with SETMAR; stimulates the topoisomerase activity. Interacts with DHX9; this interaction occurs in a E2 enzyme UBE2I- and RNA-dependent manner, negatively regulates DHX9-mediated double-stranded DNA and RNA duplex helicase activity and stimulates TOP2A-mediated supercoiled DNA relaxation activity. Interacts with HNRNPU (via C-terminus); this interaction protects the topoisomerase TOP2A from degradation and positively regulates the relaxation of supercoiled DNA in a RNA-dependent manner. Interacts with MCM3AP. Interacts with ERCC6. Interacts with PLSCR1. Interacts with GCNA; this interaction allows the resolution of topoisomerase II (TOP2A) DNA-protein cross-links. Interacts with POL1RA/RPA1 (via dock II) and UBTF in the context of Pol I complex; may assist Pol I transcription initiation by releasing supercoils occurring during DNA unwinding. Interacts with TPRN; TPRN interacts with a number of DNA damage response proteins, is recruited to sites of DNA damage and may play a role in DNA damage repair. Mg(2+) serves as cofactor. The cofactor is Mn(2+). Ca(2+) is required as a cofactor. Phosphorylation has no effect on catalytic activity. However, phosphorylation at Ser-1106 by CSNK1D/CK1 promotes DNA cleavable complex formation.

It localises to the cytoplasm. Its subcellular location is the nucleus. It is found in the nucleoplasm. The protein localises to the nucleolus. The catalysed reaction is ATP-dependent breakage, passage and rejoining of double-stranded DNA.. In terms of biological role, key decatenating enzyme that alters DNA topology by binding to two double-stranded DNA molecules, generating a double-stranded break in one of the strands, passing the intact strand through the broken strand, and religating the broken strand. May play a role in regulating the period length of BMAL1 transcriptional oscillation. In Sus scrofa (Pig), this protein is DNA topoisomerase 2-alpha (TOP2A).